The sequence spans 458 residues: MAGNAGVAEAWTVSEATRYIKQLLEDDPHLPEIWIRGELSNFKQHTRGHMYFTIKDEGSRMQAVMFAGYNRFLRFKPENGMNVLIRGEINVYEPYGQYQFYAKEMQPDGIGSLFAEYERLKKALEAEGLFAEERKRPIPRFPTHIAIITSPTGAVIRDMMTTLKRRYPQIRVTLFPVLVQGEGAPLSISRALEQASMANIFDVVIVARGGGSIEELWAFNEEMVARAIAEAAVPVISAVGHETDFTISDFAADRRAPTPTAAAEFAVPDARELMEHIGHLKKRLERSLVEQVKTRRRELERLKRSYAFRYPVQLVHQKEQQLDGLMERLNRAMQIKLEQKTLAFKHMNQAILRQHPATRVSQLQKERRQNHARLVRAMAAETQRKRQSLSAVIQQLQLLSPLAVMDRGYSLVYKDEALVKTAKDVEIEDDIVVKLADGNLHCQVVGKREMKNGGESNG.

The protein belongs to the XseA family. As to quaternary structure, heterooligomer composed of large and small subunits.

It localises to the cytoplasm. The enzyme catalyses Exonucleolytic cleavage in either 5'- to 3'- or 3'- to 5'-direction to yield nucleoside 5'-phosphates.. Functionally, bidirectionally degrades single-stranded DNA into large acid-insoluble oligonucleotides, which are then degraded further into small acid-soluble oligonucleotides. In Shouchella clausii (strain KSM-K16) (Alkalihalobacillus clausii), this protein is Exodeoxyribonuclease 7 large subunit.